A 414-amino-acid chain; its full sequence is MDSPGQGEIARDSQGRPILDRYGRPVRVRPQPRQTPPTPRTPPVNETRVYQPRQTPPRQTPPRQTPPRQMPPRQTPPRQVPPQQQYQQPGQIGQVRPQPPVIAGDGGRRRKAISFKPRGCLGTIAGVLAVGLVLVFVVTLWADSKLNRVDATPATQVANTAGTNWLLVGSDSRQGLSDEDIERLGTGGDIGVGRTDTIMVLHMPRTGEPTLLSIPRDSYVNVPGWGMDKANAAFTVGGPELLTQTVEEATGLRIDHYAEIGMGGLANMVDAVGGVEMCPAEPMYDPLANLDIQAGCQEFDGAAALGYVRTRATALGDLDRVVRQREFFSALLSTATSPGTLLNPFRTFPMISNAVGTFTVGEGDHVWHLARLALAMRGGIVTETVPIASFADYDVGNVAIWDEAGAEALFSSMR.

Residues 1–108 form a disordered region; the sequence is MDSPGQGEIA…PPVIAGDGGR (108 aa). Residues 1 to 120 are Cytoplasmic-facing; that stretch reads MDSPGQGEIA…KAISFKPRGC (120 aa). Residues 9 to 23 are compositionally biased toward basic and acidic residues; the sequence is IARDSQGRPILDRYG. Residues 33–42 are compositionally biased toward pro residues; that stretch reads RQTPPTPRTP. Residues 43 to 53 are compositionally biased toward low complexity; that stretch reads PVNETRVYQPR. Over residues 54 to 80 the composition is skewed to pro residues; it reads QTPPRQTPPRQTPPRQMPPRQTPPRQV. A helical membrane pass occupies residues 121–141; sequence LGTIAGVLAVGLVLVFVVTLW. Residues 142–414 lie on the Periplasmic side of the membrane; sequence ADSKLNRVDA…GAEALFSSMR (273 aa).

Belongs to the LytR/CpsA/Psr (LCP) family.

It is found in the cell inner membrane. The protein is Probable cell wall biosynthesis protein LcpB of Corynebacterium glutamicum (strain ATCC 13032 / DSM 20300 / JCM 1318 / BCRC 11384 / CCUG 27702 / LMG 3730 / NBRC 12168 / NCIMB 10025 / NRRL B-2784 / 534).